Here is a 319-residue protein sequence, read N- to C-terminus: 2,3,4,5-tetrahydropyridine-2,6-dicarboxylate N-succinyltransferase (319 aa).

Positions 167 and 184 each coordinate Mg(2+). Catalysis depends on E200, which acts as the Acyl-anhydride intermediate. Succinyl-CoA contacts are provided by residues R202, G217, S220, A243, 258-259 (EA), and K278.

It belongs to the type 2 tetrahydrodipicolinate N-succinyltransferase family. As to quaternary structure, homotrimer.

It localises to the cytoplasm. It carries out the reaction (S)-2,3,4,5-tetrahydrodipicolinate + succinyl-CoA + H2O = (S)-2-succinylamino-6-oxoheptanedioate + CoA. Its pathway is amino-acid biosynthesis; L-lysine biosynthesis via DAP pathway; LL-2,6-diaminopimelate from (S)-tetrahydrodipicolinate (succinylase route): step 1/3. Functionally, catalyzes the conversion of the cyclic tetrahydrodipicolinate (THDP) into the acyclic N-succinyl-L-2-amino-6-oxopimelate using succinyl-CoA. The sequence is that of 2,3,4,5-tetrahydropyridine-2,6-dicarboxylate N-succinyltransferase from Salinispora tropica (strain ATCC BAA-916 / DSM 44818 / JCM 13857 / NBRC 105044 / CNB-440).